The sequence spans 181 residues: Ribulose bisphosphate carboxylase small subunit, chloroplastic 2 (181 aa).

Residues M1–Q57 constitute a chloroplast transit peptide.

The protein belongs to the RuBisCO small chain family. As to quaternary structure, heterohexadecamer of 8 large and 8 small subunits.

Its subcellular location is the plastid. The protein localises to the chloroplast. Its function is as follows. RuBisCO catalyzes two reactions: the carboxylation of D-ribulose 1,5-bisphosphate, the primary event in carbon dioxide fixation, as well as the oxidative fragmentation of the pentose substrate. Both reactions occur simultaneously and in competition at the same active site. Although the small subunit is not catalytic it is essential for maximal activity. This Nicotiana sylvestris (Wood tobacco) protein is Ribulose bisphosphate carboxylase small subunit, chloroplastic 2.